The primary structure comprises 780 residues: cGMP-dependent protein kinase egl-4 (780 aa).

Disordered regions lie at residues 1–55 (MSSG…QVQV) and 119–143 (EQKA…DQLG). The span at 9–35 (SGGGGGGGGASGGAGGGAPGGGGGGIR) shows a compositional bias: gly residues. Residues 46–55 (DQPNGNQVQV) are compositionally biased toward polar residues. The stretch at 61 to 127 (EAHELQKLIP…LEQKAQSAAS (67 aa)) forms a coiled coil. Residues 265-268 (GELA), 275-276 (RT), Arg380, 389-392 (GERA), 399-400 (RT), and Tyr434 each bind 3',5'-cyclic GMP. The region spanning 469–729 (VKRLATLGVG…VNDIRKHRWF (261 aa)) is the Protein kinase domain. ATP is bound by residues 475–483 (LGVGGFGRV) and Lys499. A Nuclear localization signal motif is present at residues 492-504 (KAKTFALKALKKK). Asp593 functions as the Proton acceptor in the catalytic mechanism. In terms of domain architecture, AGC-kinase C-terminal spans 730–780 (MGFDWEGLRSRTLKPPILPKVSNPADVTNFDNYPPDNDVPPDEFSGWDEGF). Residues 757-780 (TNFDNYPPDNDVPPDEFSGWDEGF) form a disordered region.

The protein belongs to the protein kinase superfamily. AGC Ser/Thr protein kinase family. cGMP subfamily. When phosphorylated, interacts with saeg-2. May interact with saeg-1. Requires Mg(2+) as cofactor. In terms of processing, autophosphorylated. In terms of tissue distribution, expressed in AWC sensory neurons (at protein level). Mainly expressed in head neurons, hypodermis, intestine and body wall muscles. L2 and L3 larvae show extensive expression, lower levels are observed in L4 larvae, later embryos and adults. Isoform c is expressed in a subset of neurons in the head, nerve ring, and ventral nerve cord including some motor neurons, also in several neurons in the tail, the pharyngeal marginal cells, body muscle, intestine, vulval muscles, and spermatheca.

The protein localises to the cytoplasm. The protein resides in the nucleus. It carries out the reaction L-seryl-[protein] + ATP = O-phospho-L-seryl-[protein] + ADP + H(+). The enzyme catalyses L-threonyl-[protein] + ATP = O-phospho-L-threonyl-[protein] + ADP + H(+). Its activity is regulated as follows. Binding of cGMP results in enzyme activation. Functionally, promotes chemoreceptor gene expression in response to increased cGMP levels by antagonizing the gene repression functions of the class II HDAC hda-4 and the mef-2 transcription factor. Regulates gene expression via recruitment of a histone deacetylase complex containing hda-2, saeg-1 and saeg-2. Represses body size and lifespan through the dbl-1 and insulin pathways, respectively. May also signal through daf-3 and/or daf-5. Role in egg-laying, dauer formation and motility. Regulates behavioral responses to various chemosensory stimuli in sensory neurons. Required for the initiation of long term adaptation to prolonged odor exposure which results in a decrease in odor seeking behavior. May regulate this process by phosphorylating tax-2, a subunit of cyclic nucleotide-gated channel tax-2/tax-4. In ASH sensory neurons, negatively regulates avoidance behavior to some bitter tastants, such as quinine, probably by phosphorylating rgs-2 and rgs-3 which are 2 regulator of G-protein signaling proteins. In AWB sensory neurons, involved in avoidance behavior to some repellent odors. In ASE left (ASEL) sensory neuron, involved in the sensing of environmental alkalinity downstream of receptor-type guanylate cyclase gcy-14. In sensory neurons, involved in the signaling pathway downstream of insulin, TGF-beta and receptor-type guanylate cyclase responsible for inducing quiescence after food intake. Might play a role in aversive olfactory learning in AWC neurons when an odor is associated with food deprivation, depending on the ins-1/age-1 signal from the AIA to the AWC neurons. Probably by regulating neuronal transmission downstream of lin-3 and receptor lin-23 and phospholipase plc-3 in ALA neurons, involved in the decrease in locomotion during the quiescent state that precedes each larval molt. The polypeptide is cGMP-dependent protein kinase egl-4 (Caenorhabditis elegans).